We begin with the raw amino-acid sequence, 304 residues long: Elongation factor Ts (304 aa).

Residues 82–85 are involved in Mg(2+) ion dislocation from EF-Tu; the sequence is TDFV.

This sequence belongs to the EF-Ts family.

The protein localises to the cytoplasm. Associates with the EF-Tu.GDP complex and induces the exchange of GDP to GTP. It remains bound to the aminoacyl-tRNA.EF-Tu.GTP complex up to the GTP hydrolysis stage on the ribosome. The chain is Elongation factor Ts from Symbiobacterium thermophilum (strain DSM 24528 / JCM 14929 / IAM 14863 / T).